Here is a 48-residue protein sequence, read N- to C-terminus: Glycine-rich RNA-binding protein 3 (48 aa).

The chain is Glycine-rich RNA-binding protein 3 from Populus euphratica (Euphrates poplar).